The sequence spans 272 residues: Ribosomal RNA small subunit methyltransferase A (272 aa).

Residues Asn-18, Leu-20, Gly-45, Glu-66, Asp-91, and Asn-113 each coordinate S-adenosyl-L-methionine.

Belongs to the class I-like SAM-binding methyltransferase superfamily. rRNA adenine N(6)-methyltransferase family. RsmA subfamily.

The protein localises to the cytoplasm. The catalysed reaction is adenosine(1518)/adenosine(1519) in 16S rRNA + 4 S-adenosyl-L-methionine = N(6)-dimethyladenosine(1518)/N(6)-dimethyladenosine(1519) in 16S rRNA + 4 S-adenosyl-L-homocysteine + 4 H(+). Functionally, specifically dimethylates two adjacent adenosines (A1518 and A1519) in the loop of a conserved hairpin near the 3'-end of 16S rRNA in the 30S particle. May play a critical role in biogenesis of 30S subunits. The sequence is that of Ribosomal RNA small subunit methyltransferase A from Yersinia pestis bv. Antiqua (strain Antiqua).